Consider the following 204-residue polypeptide: dITP/XTP pyrophosphatase (204 aa).

7-12 (TNNKDK) serves as a coordination point for substrate. 2 residues coordinate Mg(2+): Asp-38 and Asp-74. The Proton acceptor role is filled by Asp-74. Substrate contacts are provided by residues Ser-75, 156-159 (FGYD), Lys-179, and 184-185 (HR).

This sequence belongs to the HAM1 NTPase family. As to quaternary structure, homodimer. It depends on Mg(2+) as a cofactor.

The enzyme catalyses XTP + H2O = XMP + diphosphate + H(+). It catalyses the reaction dITP + H2O = dIMP + diphosphate + H(+). The catalysed reaction is ITP + H2O = IMP + diphosphate + H(+). Pyrophosphatase that catalyzes the hydrolysis of nucleoside triphosphates to their monophosphate derivatives, with a high preference for the non-canonical purine nucleotides XTP (xanthosine triphosphate), dITP (deoxyinosine triphosphate) and ITP. Seems to function as a house-cleaning enzyme that removes non-canonical purine nucleotides from the nucleotide pool, thus preventing their incorporation into DNA/RNA and avoiding chromosomal lesions. This is dITP/XTP pyrophosphatase from Campylobacter fetus subsp. fetus (strain 82-40).